A 276-amino-acid polypeptide reads, in one-letter code: Diaminopimelate epimerase (276 aa).

Residues N13, Q46, and N66 each contribute to the substrate site. C75 serves as the catalytic Proton donor. Substrate contacts are provided by residues 76–77, N159, N192, and 210–211; these read GN and ER. The Proton acceptor role is filled by C219. 220 to 221 is a binding site for substrate; it reads GS.

It belongs to the diaminopimelate epimerase family. As to quaternary structure, homodimer.

Its subcellular location is the cytoplasm. It catalyses the reaction (2S,6S)-2,6-diaminopimelate = meso-2,6-diaminopimelate. It participates in amino-acid biosynthesis; L-lysine biosynthesis via DAP pathway; DL-2,6-diaminopimelate from LL-2,6-diaminopimelate: step 1/1. Functionally, catalyzes the stereoinversion of LL-2,6-diaminopimelate (L,L-DAP) to meso-diaminopimelate (meso-DAP), a precursor of L-lysine and an essential component of the bacterial peptidoglycan. In Coxiella burnetii (strain CbuK_Q154) (Coxiella burnetii (strain Q154)), this protein is Diaminopimelate epimerase.